A 150-amino-acid chain; its full sequence is Allograft inflammatory factor 1-like (150 aa).

Position 2 is an N-acetylserine (S2). Residue S2 is modified to Phosphoserine. The EF-hand 1 domain occupies 47–82 (EKLAAFKEKYMEFDLNNEGEIDLMSLKRMMEKLGVP). Positions 60, 62, 64, and 66 each coordinate Ca(2+). The EF-hand 2; degenerate domain maps to 83 to 117 (KTHLEMKKMISEVTGGVSDTISYRDFVNMMLGKRS). Residues 129 to 150 (KANESSPKPAGPPPERDIASLP) are disordered. S134 carries the post-translational modification Phosphoserine.

As to quaternary structure, homodimer (Potential). Monomer.

The protein localises to the cytoplasm. It localises to the cytoskeleton. Its subcellular location is the cell projection. It is found in the ruffle membrane. Its function is as follows. Actin-binding protein that promotes actin bundling. May neither bind calcium nor depend on calcium for function. The sequence is that of Allograft inflammatory factor 1-like (Aif1l) from Mus musculus (Mouse).